The chain runs to 147 residues: Heavy metal-dependent transcription regulator 2 (147 aa).

Residues 1–69 (MNIGEASKTS…VEQIKELLAL (69 aa)) form the HTH merR-type domain. Residues 3–22 (IGEASKTSGVSSKMIRYYEQ) constitute a DNA-binding region (H-T-H motif).

The protein resides in the cytoplasm. Functionally, transcriptional regulator involved in acid tolerance. Binds copper. This is Heavy metal-dependent transcription regulator 2 (hmrR2) from Rhizobium meliloti (strain 1021) (Ensifer meliloti).